Consider the following 1009-residue polypeptide: Delphilin (1009 aa).

5 disordered regions span residues Cys28–Met82, Glu170–Ser193, Ala322–Thr369, Glu414–Asn635, and Ser990–Trp1009. Over residues Arg44–Gln53 the composition is skewed to basic and acidic residues. Residues Thr95–Pro172 enclose the PDZ domain. The span at Ala322 to Tyr332 shows a compositional bias: polar residues. Low complexity-rich tracts occupy residues Ser334 to Pro352 and Asp427 to Asp439. Pro residues-rich tracts occupy residues Ile441–Leu455, Ser462–Ala477, and Ile484–Pro493. Over residues Ser521 to Gln535 the composition is skewed to low complexity. The segment covering Ala557–Thr602 has biased composition (polar residues). Residues Val607–Ser628 are compositionally biased toward pro residues. An FH2 domain is found at Pro629–Trp1009.

It is found in the postsynaptic cell membrane. Postsynaptic scaffolding protein. The polypeptide is Delphilin (grid2ip) (Danio rerio (Zebrafish)).